A 403-amino-acid chain; its full sequence is Flavohemoprotein (403 aa).

Residues 1–138 form the Globin domain; it reads MLTQKTKDIV…LADILAGMES (138 aa). Histidine 85 serves as a coordination point for heme b. Residues tyrosine 95 and glutamate 137 each act as charge relay system in the active site. The reductase stretch occupies residues 149–403; it reads GGWAGWRRFI…EVFGPDLFAE (255 aa). Positions 152 to 262 constitute an FAD-binding FR-type domain; it reads AGWRRFIVRE…AAPYGNFYID (111 aa). Residues tyrosine 190 and 206–209 contribute to the FAD site; that span reads RQYS. 275-280 contacts NADP(+); the sequence is GVGLTP. 395–398 is an FAD binding site; that stretch reads VFGP.

Belongs to the globin family. Two-domain flavohemoproteins subfamily. This sequence in the C-terminal section; belongs to the flavoprotein pyridine nucleotide cytochrome reductase family. The cofactor is heme b. FAD is required as a cofactor.

It carries out the reaction 2 nitric oxide + NADPH + 2 O2 = 2 nitrate + NADP(+) + H(+). The enzyme catalyses 2 nitric oxide + NADH + 2 O2 = 2 nitrate + NAD(+) + H(+). Is involved in NO detoxification in an aerobic process, termed nitric oxide dioxygenase (NOD) reaction that utilizes O(2) and NAD(P)H to convert NO to nitrate, which protects the bacterium from various noxious nitrogen compounds. Therefore, plays a central role in the inducible response to nitrosative stress. This chain is Flavohemoprotein, found in Rhizobium meliloti (strain 1021) (Ensifer meliloti).